The primary structure comprises 460 residues: ATP synthase subunit beta (460 aa).

Residue 150 to 157 (GGAGVGKT) participates in ATP binding.

It belongs to the ATPase alpha/beta chains family. As to quaternary structure, F-type ATPases have 2 components, CF(1) - the catalytic core - and CF(0) - the membrane proton channel. CF(1) has five subunits: alpha(3), beta(3), gamma(1), delta(1), epsilon(1). CF(0) has three main subunits: a(1), b(2) and c(9-12). The alpha and beta chains form an alternating ring which encloses part of the gamma chain. CF(1) is attached to CF(0) by a central stalk formed by the gamma and epsilon chains, while a peripheral stalk is formed by the delta and b chains.

It localises to the cell inner membrane. The catalysed reaction is ATP + H2O + 4 H(+)(in) = ADP + phosphate + 5 H(+)(out). Functionally, produces ATP from ADP in the presence of a proton gradient across the membrane. The catalytic sites are hosted primarily by the beta subunits. The chain is ATP synthase subunit beta from Erwinia tasmaniensis (strain DSM 17950 / CFBP 7177 / CIP 109463 / NCPPB 4357 / Et1/99).